Here is a 175-residue protein sequence, read N- to C-terminus: ATP synthase subunit b (175 aa).

A helical transmembrane segment spans residues 23-43 (TGITFLVLLFVLGKFAWGPIV).

Belongs to the ATPase B chain family. F-type ATPases have 2 components, F(1) - the catalytic core - and F(0) - the membrane proton channel. F(1) has five subunits: alpha(3), beta(3), gamma(1), delta(1), epsilon(1). F(0) has three main subunits: a(1), b(2) and c(10-14). The alpha and beta chains form an alternating ring which encloses part of the gamma chain. F(1) is attached to F(0) by a central stalk formed by the gamma and epsilon chains, while a peripheral stalk is formed by the delta and b chains.

Its subcellular location is the cell inner membrane. Functionally, f(1)F(0) ATP synthase produces ATP from ADP in the presence of a proton or sodium gradient. F-type ATPases consist of two structural domains, F(1) containing the extramembraneous catalytic core and F(0) containing the membrane proton channel, linked together by a central stalk and a peripheral stalk. During catalysis, ATP synthesis in the catalytic domain of F(1) is coupled via a rotary mechanism of the central stalk subunits to proton translocation. Component of the F(0) channel, it forms part of the peripheral stalk, linking F(1) to F(0). The protein is ATP synthase subunit b of Anaeromyxobacter sp. (strain Fw109-5).